The primary structure comprises 209 residues: FMN-dependent NADH:quinone oxidoreductase (209 aa).

FMN-binding positions include Ser-10, 16–18, and 98–101; these read SHS and MWNF.

This sequence belongs to the azoreductase type 1 family. As to quaternary structure, homodimer. The cofactor is FMN.

The catalysed reaction is 2 a quinone + NADH + H(+) = 2 a 1,4-benzosemiquinone + NAD(+). It carries out the reaction N,N-dimethyl-1,4-phenylenediamine + anthranilate + 2 NAD(+) = 2-(4-dimethylaminophenyl)diazenylbenzoate + 2 NADH + 2 H(+). Its function is as follows. Quinone reductase that provides resistance to thiol-specific stress caused by electrophilic quinones. In terms of biological role, also exhibits azoreductase activity. Catalyzes the reductive cleavage of the azo bond in aromatic azo compounds to the corresponding amines. This Nitratidesulfovibrio vulgaris (strain ATCC 29579 / DSM 644 / CCUG 34227 / NCIMB 8303 / VKM B-1760 / Hildenborough) (Desulfovibrio vulgaris) protein is FMN-dependent NADH:quinone oxidoreductase.